We begin with the raw amino-acid sequence, 207 residues long: Ribosomal RNA large subunit methyltransferase E (207 aa).

S-adenosyl-L-methionine contacts are provided by Gly-60, Trp-62, Asp-80, Asp-96, and Asp-121. The active-site Proton acceptor is the Lys-161.

This sequence belongs to the class I-like SAM-binding methyltransferase superfamily. RNA methyltransferase RlmE family.

It is found in the cytoplasm. It carries out the reaction uridine(2552) in 23S rRNA + S-adenosyl-L-methionine = 2'-O-methyluridine(2552) in 23S rRNA + S-adenosyl-L-homocysteine + H(+). Functionally, specifically methylates the uridine in position 2552 of 23S rRNA at the 2'-O position of the ribose in the fully assembled 50S ribosomal subunit. This Marinobacter nauticus (strain ATCC 700491 / DSM 11845 / VT8) (Marinobacter aquaeolei) protein is Ribosomal RNA large subunit methyltransferase E.